A 125-amino-acid chain; its full sequence is Glycine cleavage system H protein (125 aa).

The Lipoyl-binding domain occupies 19–101 (IATIGITDYA…MGDGWFIKLR (83 aa)). Lys-60 bears the N6-lipoyllysine mark.

The protein belongs to the GcvH family. The glycine cleavage system is composed of four proteins: P, T, L and H. Requires (R)-lipoate as cofactor.

The glycine cleavage system catalyzes the degradation of glycine. The H protein shuttles the methylamine group of glycine from the P protein to the T protein. This Parvibaculum lavamentivorans (strain DS-1 / DSM 13023 / NCIMB 13966) protein is Glycine cleavage system H protein.